A 127-amino-acid chain; its full sequence is Small ribosomal subunit protein uS11 (127 aa).

This sequence belongs to the universal ribosomal protein uS11 family. As to quaternary structure, part of the 30S ribosomal subunit. Interacts with proteins S7 and S18. Binds to IF-3.

Its function is as follows. Located on the platform of the 30S subunit, it bridges several disparate RNA helices of the 16S rRNA. Forms part of the Shine-Dalgarno cleft in the 70S ribosome. This Streptococcus mutans serotype c (strain ATCC 700610 / UA159) protein is Small ribosomal subunit protein uS11.